Here is a 793-residue protein sequence, read N- to C-terminus: E3 UFM1-protein ligase 1 (793 aa).

Ala-2 is modified (N-acetylalanine). The mediates interaction with DDRGK1 stretch occupies residues 2-200; that stretch reads ADAWEEIRRL…RGLFSAITRP (199 aa). Positions 2-212 are required for E3 UFM1-protein ligase activity; sequence ADAWEEIRRL…VNSLVSKYGF (211 aa). Positions 121–250 are involved in CDK5RAP3-binding; it reads DRLSEEVNDK…KAVFVPDIYS (130 aa). Residues 200-400 form a mediates interaction with TRIP4 region; it reads PTAVNSLVSK…NPVHLITEED (201 aa). The tract at residues 410–473 is disordered; it reads VNTNKKDKKD…SSHAGKKKPD (64 aa). Position 433 is an omega-N-methylarginine (Arg-433). Residues Ser-458 and Ser-462 each carry the phosphoserine modification. The tract at residues 490-683 is mediates interaction with CDK5RAP3; sequence IPDAPEEFIS…QLKVTEDPAL (194 aa). At Thr-535 the chain carries Phosphothreonine. The tract at residues 742–769 is disordered; it reads NKKSGQGEDPSSDDLDKEQHDVTNTTRK. Phosphoserine is present on residues Ser-752 and Ser-753. The span at 758-769 shows a compositional bias: basic and acidic residues; the sequence is KEQHDVTNTTRK.

It belongs to the UFL1 family. As to quaternary structure, catalytic component of the UFM1 ribosome E3 ligase (UREL) complex, composed of UFL1, DDRGK1 and CDK5RAP3. Interacts with E2-like enzyme UFC1. Interacts with RELA. Interacts with NBN; promoting recruitment to double-strand breaks following DNA damage. Interacts (when phosphorylated) with YWHAG/14-3-3-gamma; sequestering UFL1 and preventing its association with PDCD1/PD-1 substrate. In terms of processing, ubiquitinated, leading to its degradation by the proteasome. Interaction with CDK5RAP3 protects both proteins against ubiquitination and degradation via the proteasome. Phosphorylated at Ser-462 by ATM, enhancing protein ligase activity and promoting ATM activation in a positive feedback loop. Phosphorylation at Thr-535 by AMPK promotes its interaction with YWHAG/14-3-3-gamma, thereby preventing UFL1 association with PDCD1/PD-1 substrate. In terms of tissue distribution, ubiquitously expressed with expression detected in brain, skeletal muscle, lung, heart, gall bladder, liver, small intestine, pancreas, spleen and kidney (at protein level). At 8 weeks after birth, high expression in the Purkinje cell layer of the cerebellum.

The protein localises to the endoplasmic reticulum membrane. Its subcellular location is the cytoplasm. It localises to the cytosol. The protein resides in the nucleus. It is found in the chromosome. In terms of biological role, E3 protein ligase that mediates ufmylation, the covalent attachment of the ubiquitin-like modifier UFM1 to lysine residues on target proteins, and which plays a key role in various processes, such as ribosome recycling, response to DNA damage, interferon response or reticulophagy (also called ER-phagy). Catalyzes ufmylation of many protein, such as CD274/PD-L1, CDK5RAP3, CYB5R3, DDRGK1, EIF6, histone H4, MRE11, P4HB, PDCD1/PD-1, TRIP4, RPN1, RPS20/uS10, RPL10/uL16, RPL26/uL24, SYVN1/HRD1 and TP53/p53. As part of the UREL complex, plays a key role in ribosome recycling by catalyzing mono-ufmylation of RPL26/uL24 subunit of the 60S ribosome. Ufmylation of RPL26/uL24 occurs on free 60S ribosomes following ribosome dissociation: it weakens the junction between post-termination 60S subunits and SEC61 translocons, promoting release and recycling of the large ribosomal subunit from the endoplasmic reticulum membrane. Ufmylation of RPL26/uL24 and subsequent 60S ribosome recycling either take place after normal termination of translation or after ribosome stalling during cotranslational translocation at the endoplasmic reticulum. Involved in reticulophagy in response to endoplasmic reticulum stress by mediating ufmylation of proteins such as CYB5R3 and RPN1, thereby promoting lysosomal degradation of ufmylated proteins. Ufmylation in response to endoplasmic reticulum stress is essential for processes such as hematopoiesis, blood vessel morphogenesis or inflammatory response. Mediates ufmylation of DDRGK1 and CDK5RAP3; the role of these modifications is however unclear: as both DDRGK1 and CDK5RAP3 act as substrate adapters for ufmylation, it is uncertain whether ufmylation of these proteins is, a collateral effect or is required for ufmylation. Acts as a negative regulator of T-cell activation by mediating ufmylation and stabilization of PDCD1/PD-1. Also involved in the response to DNA damage: recruited to double-strand break sites following DNA damage and mediates monoufmylation of histone H4 and ufmylation of MRE11. Mediates ufmylation of TP53/p53, promoting its stability. Catalyzes ufmylation of TRIP4, thereby playing a role in nuclear receptor-mediated transcription. Required for hematopoietic stem cell function and hematopoiesis. The chain is E3 UFM1-protein ligase 1 from Rattus norvegicus (Rat).